Reading from the N-terminus, the 813-residue chain is Phosphoribosylformylglycinamidine synthase subunit PurL (813 aa).

Histidine 56 is a catalytic residue. ATP is bound by residues tyrosine 59 and lysine 103. Glutamate 105 is a binding site for Mg(2+). Residues 106 to 109 and arginine 128 contribute to the substrate site; that span reads SHNH. Histidine 107 serves as the catalytic Proton acceptor. Aspartate 129 contributes to the Mg(2+) binding site. Glutamine 253 provides a ligand contact to substrate. Aspartate 281 is a Mg(2+) binding site. 325-327 lines the substrate pocket; sequence ESQ. ATP-binding residues include asparagine 511 and glycine 548. Asparagine 549 is a binding site for Mg(2+). Serine 551 serves as a coordination point for substrate.

This sequence belongs to the FGAMS family. In terms of assembly, monomer. Part of the FGAM synthase complex composed of 1 PurL, 1 PurQ and 2 PurS subunits.

It localises to the cytoplasm. The catalysed reaction is N(2)-formyl-N(1)-(5-phospho-beta-D-ribosyl)glycinamide + L-glutamine + ATP + H2O = 2-formamido-N(1)-(5-O-phospho-beta-D-ribosyl)acetamidine + L-glutamate + ADP + phosphate + H(+). The protein operates within purine metabolism; IMP biosynthesis via de novo pathway; 5-amino-1-(5-phospho-D-ribosyl)imidazole from N(2)-formyl-N(1)-(5-phospho-D-ribosyl)glycinamide: step 1/2. Its function is as follows. Part of the phosphoribosylformylglycinamidine synthase complex involved in the purines biosynthetic pathway. Catalyzes the ATP-dependent conversion of formylglycinamide ribonucleotide (FGAR) and glutamine to yield formylglycinamidine ribonucleotide (FGAM) and glutamate. The FGAM synthase complex is composed of three subunits. PurQ produces an ammonia molecule by converting glutamine to glutamate. PurL transfers the ammonia molecule to FGAR to form FGAM in an ATP-dependent manner. PurS interacts with PurQ and PurL and is thought to assist in the transfer of the ammonia molecule from PurQ to PurL. The sequence is that of Phosphoribosylformylglycinamidine synthase subunit PurL from Corynebacterium jeikeium (strain K411).